A 21-amino-acid polypeptide reads, in one-letter code: Dahlein-5.2 (21 aa).

In terms of tissue distribution, expressed by the skin dorsal glands.

The protein localises to the secreted. Has no antimicrobial activity. Strongly inhibits the formation of NO by neuronal nitric oxide synthase at micromolar concentrations. The protein is Dahlein-5.2 of Ranoidea dahlii (Dahl's aquatic frog).